Reading from the N-terminus, the 207-residue chain is Shikimate kinase (207 aa).

ATP is bound at residue 32–37 (GVGKST). Residue serine 36 participates in Mg(2+) binding. The substrate site is built by aspartate 54, arginine 78, and glycine 100. Arginine 138 provides a ligand contact to ATP. Arginine 157 is a binding site for substrate.

Belongs to the shikimate kinase family. In terms of assembly, monomer. Requires Mg(2+) as cofactor.

The protein resides in the cytoplasm. It carries out the reaction shikimate + ATP = 3-phosphoshikimate + ADP + H(+). Its pathway is metabolic intermediate biosynthesis; chorismate biosynthesis; chorismate from D-erythrose 4-phosphate and phosphoenolpyruvate: step 5/7. Its function is as follows. Catalyzes the specific phosphorylation of the 3-hydroxyl group of shikimic acid using ATP as a cosubstrate. The sequence is that of Shikimate kinase from Bradyrhizobium diazoefficiens (strain JCM 10833 / BCRC 13528 / IAM 13628 / NBRC 14792 / USDA 110).